The primary structure comprises 104 residues: Chitin-binding protein 2 (104 aa).

Oligomer in an unreduced state. In terms of processing, glycosylated.

Its function is as follows. Chitin-binding protein. Has antifungal activity against C.krusei, C.albicans, C.tropicalis and C.parapsilosis. Inhibits C.albicans by increasing cell membrane permeability and production of reactive oxygen species. Has no hemagglutinating activity. The chain is Chitin-binding protein 2 from Moringa oleifera (Horseradish tree).